The sequence spans 304 residues: Developmental pluripotency-associated protein 4 (304 aa).

Over residues 1 to 11 (MLRGSASSTSM) the composition is skewed to polar residues. 2 disordered regions span residues 1–84 (MLRG…IPPL) and 147–176 (KKLK…VGEP). The span at 12–29 (EKAKGKEWTSTEKSREED) shows a compositional bias: basic and acidic residues. Residue T215 is modified to Phosphothreonine. A phosphoserine mark is found at S221 and S226.

In terms of assembly, interacts with DPPA2. Interacts with PCGF1.

It localises to the nucleus. Functionally, may be involved in the maintenance of active epigenetic status of target genes. May inhibit differentiation of embryonic cells into a primitive ectoderm lineage. In Homo sapiens (Human), this protein is Developmental pluripotency-associated protein 4 (DPPA4).